Consider the following 394-residue polypeptide: 1-deoxy-D-xylulose 5-phosphate reductoisomerase (394 aa).

The NADPH site is built by T12, G13, S14, I15, K39, Q40, and N126. K127 contacts 1-deoxy-D-xylulose 5-phosphate. An NADPH-binding site is contributed by E128. D152 is a Mn(2+) binding site. Residues S153, E154, S183, and H206 each contribute to the 1-deoxy-D-xylulose 5-phosphate site. Residue E154 coordinates Mn(2+). G212 provides a ligand contact to NADPH. 1-deoxy-D-xylulose 5-phosphate contacts are provided by S219, N224, K225, and E228. E228 contacts Mn(2+).

The protein belongs to the DXR family. Requires Mg(2+) as cofactor. It depends on Mn(2+) as a cofactor.

The enzyme catalyses 2-C-methyl-D-erythritol 4-phosphate + NADP(+) = 1-deoxy-D-xylulose 5-phosphate + NADPH + H(+). Its pathway is isoprenoid biosynthesis; isopentenyl diphosphate biosynthesis via DXP pathway; isopentenyl diphosphate from 1-deoxy-D-xylulose 5-phosphate: step 1/6. Functionally, catalyzes the NADPH-dependent rearrangement and reduction of 1-deoxy-D-xylulose-5-phosphate (DXP) to 2-C-methyl-D-erythritol 4-phosphate (MEP). The chain is 1-deoxy-D-xylulose 5-phosphate reductoisomerase from Neisseria gonorrhoeae (strain ATCC 700825 / FA 1090).